The primary structure comprises 95 residues: Large ribosomal subunit protein bL25 (95 aa).

The protein belongs to the bacterial ribosomal protein bL25 family. Part of the 50S ribosomal subunit; part of the 5S rRNA/L5/L18/L25 subcomplex. Contacts the 5S rRNA. Binds to the 5S rRNA independently of L5 and L18.

This is one of the proteins that binds to the 5S RNA in the ribosome where it forms part of the central protuberance. This chain is Large ribosomal subunit protein bL25, found in Shewanella sp. (strain ANA-3).